A 695-amino-acid polypeptide reads, in one-letter code: NADPH--cytochrome P450 reductase (695 aa).

Topologically, residues 1–8 are lumenal; that stretch reads MAQLDTLD. A helical transmembrane segment spans residues 9–31; that stretch reads IVVLVVLLVGSVAYFTKGSYWAV. The Cytoplasmic segment spans residues 32–695; sequence PKDPYAAANS…SGSYQEDVWS (664 aa). Residues 66–221 form the Flavodoxin-like domain; it reads CVIFYGSQTG…DFLAWKEPMW (156 aa). FMN contacts are provided by residues 72–77, 123–126, 169–178, and Asp-204; these read SQTGTA, ATYG, and LGNNTYEHYN. An FAD-binding FR-type domain is found at 277-538; that stretch reads HNPYIAPIVE…HVRHSNFKLP (262 aa). Arg-296 contacts NADP(+). FAD is bound by residues 451–454, 469–471, and 486–489; these read RYYS, TAV, and GVTT. Residues Thr-552, 614–615, 620–624, and Glu-656 contribute to the NADP(+) site; these read SR and KVYVQ. An FAD-binding site is contributed by Trp-694.

The protein belongs to the NADPH--cytochrome P450 reductase family. It in the N-terminal section; belongs to the flavodoxin family. In the C-terminal section; belongs to the flavoprotein pyridine nucleotide cytochrome reductase family. Requires FAD as cofactor. FMN serves as cofactor.

The protein localises to the endoplasmic reticulum membrane. The protein resides in the mitochondrion outer membrane. Its subcellular location is the cell membrane. It carries out the reaction 2 oxidized [cytochrome P450] + NADPH = 2 reduced [cytochrome P450] + NADP(+) + H(+). In terms of biological role, this enzyme is required for electron transfer from NADP to cytochrome P450 in microsomes. It can also provide electron transfer to heme oxygenase and cytochrome B5. Involved in ergosterol biosynthesis. This is NADPH--cytochrome P450 reductase from Aspergillus fumigatus (strain ATCC MYA-4609 / CBS 101355 / FGSC A1100 / Af293) (Neosartorya fumigata).